The chain runs to 544 residues: Peptide chain release factor 3 (544 aa).

Residues 17 to 286 enclose the tr-type G domain; sequence EKRRNFAIIS…SFLDYGLAPR (270 aa). Residues 26 to 33, 94 to 98, and 148 to 151 contribute to the GTP site; these read SHPDAGKT, DTPGH, and NKMD.

The protein belongs to the TRAFAC class translation factor GTPase superfamily. Classic translation factor GTPase family. PrfC subfamily.

The protein localises to the cytoplasm. Functionally, increases the formation of ribosomal termination complexes and stimulates activities of RF-1 and RF-2. It binds guanine nucleotides and has strong preference for UGA stop codons. It may interact directly with the ribosome. The stimulation of RF-1 and RF-2 is significantly reduced by GTP and GDP, but not by GMP. The protein is Peptide chain release factor 3 of Microcystis aeruginosa (strain NIES-843 / IAM M-2473).